Consider the following 115-residue polypeptide: Large ribosomal subunit protein bL19 (115 aa).

Belongs to the bacterial ribosomal protein bL19 family.

Functionally, this protein is located at the 30S-50S ribosomal subunit interface and may play a role in the structure and function of the aminoacyl-tRNA binding site. This is Large ribosomal subunit protein bL19 from Streptococcus mutans serotype c (strain ATCC 700610 / UA159).